The primary structure comprises 465 residues: 3-isopropylmalate dehydratase large subunit (465 aa).

Residues Cys347, Cys407, and Cys410 each contribute to the [4Fe-4S] cluster site.

It belongs to the aconitase/IPM isomerase family. LeuC type 1 subfamily. Heterodimer of LeuC and LeuD. Requires [4Fe-4S] cluster as cofactor.

It carries out the reaction (2R,3S)-3-isopropylmalate = (2S)-2-isopropylmalate. The protein operates within amino-acid biosynthesis; L-leucine biosynthesis; L-leucine from 3-methyl-2-oxobutanoate: step 2/4. Its function is as follows. Catalyzes the isomerization between 2-isopropylmalate and 3-isopropylmalate, via the formation of 2-isopropylmaleate. The sequence is that of 3-isopropylmalate dehydratase large subunit from Aeromonas salmonicida (strain A449).